Consider the following 301-residue polypeptide: GTPase Era (301 aa).

The 168-residue stretch at 6-173 (KSGFVAIVGR…LEQTNANLEI (168 aa)) folds into the Era-type G domain. The interval 14–21 (GRPNVGKS) is G1. A GTP-binding site is contributed by 14-21 (GRPNVGKS). Residues 40–44 (QTTRN) form a G2 region. Positions 61–64 (DTPG) are G3. GTP-binding positions include 61-65 (DTPGI) and 123-126 (NKID). Residues 123–126 (NKID) form a G4 region. The segment at 152-154 (ISA) is G5. Residues 204-282 (TREEVPHSVA…FLEIWVKVQK (79 aa)) form the KH type-2 domain.

This sequence belongs to the TRAFAC class TrmE-Era-EngA-EngB-Septin-like GTPase superfamily. Era GTPase family. Monomer.

It localises to the cytoplasm. The protein resides in the cell membrane. Its function is as follows. An essential GTPase that binds both GDP and GTP, with rapid nucleotide exchange. Plays a role in 16S rRNA processing and 30S ribosomal subunit biogenesis and possibly also in cell cycle regulation and energy metabolism. The protein is GTPase Era of Listeria monocytogenes serotype 4b (strain F2365).